Consider the following 165-residue polypeptide: Phosphopantetheine adenylyltransferase (165 aa).

Substrate is bound at residue serine 10. ATP is bound by residues 10–11 (SF) and histidine 18. Positions 42, 79, and 93 each coordinate substrate. ATP-binding positions include 94 to 96 (GLR), glutamate 104, and 129 to 135 (VRPITAT).

Belongs to the bacterial CoaD family. As to quaternary structure, homohexamer. It depends on Mg(2+) as a cofactor.

The protein resides in the cytoplasm. It catalyses the reaction (R)-4'-phosphopantetheine + ATP + H(+) = 3'-dephospho-CoA + diphosphate. It participates in cofactor biosynthesis; coenzyme A biosynthesis; CoA from (R)-pantothenate: step 4/5. Reversibly transfers an adenylyl group from ATP to 4'-phosphopantetheine, yielding dephospho-CoA (dPCoA) and pyrophosphate. This Rhodopseudomonas palustris (strain BisB5) protein is Phosphopantetheine adenylyltransferase.